Here is a 479-residue protein sequence, read N- to C-terminus: Glycogen synthase (479 aa).

Lys-15 is an ADP-alpha-D-glucose binding site.

It belongs to the glycosyltransferase 1 family. Bacterial/plant glycogen synthase subfamily.

The enzyme catalyses [(1-&gt;4)-alpha-D-glucosyl](n) + ADP-alpha-D-glucose = [(1-&gt;4)-alpha-D-glucosyl](n+1) + ADP + H(+). The protein operates within glycan biosynthesis; glycogen biosynthesis. Synthesizes alpha-1,4-glucan chains using ADP-glucose. The polypeptide is Glycogen synthase (Pectobacterium carotovorum subsp. carotovorum (strain PC1)).